Consider the following 234-residue polypeptide: Phosphoribosylaminoimidazole-succinocarboxamide synthase (234 aa).

The protein belongs to the SAICAR synthetase family.

The enzyme catalyses 5-amino-1-(5-phospho-D-ribosyl)imidazole-4-carboxylate + L-aspartate + ATP = (2S)-2-[5-amino-1-(5-phospho-beta-D-ribosyl)imidazole-4-carboxamido]succinate + ADP + phosphate + 2 H(+). It participates in purine metabolism; IMP biosynthesis via de novo pathway; 5-amino-1-(5-phospho-D-ribosyl)imidazole-4-carboxamide from 5-amino-1-(5-phospho-D-ribosyl)imidazole-4-carboxylate: step 1/2. This is Phosphoribosylaminoimidazole-succinocarboxamide synthase from Streptococcus pyogenes serotype M3 (strain ATCC BAA-595 / MGAS315).